The following is a 515-amino-acid chain: Maturase K (515 aa).

The protein belongs to the intron maturase 2 family. MatK subfamily.

It localises to the plastid. The protein localises to the chloroplast. Usually encoded in the trnK tRNA gene intron. Probably assists in splicing its own and other chloroplast group II introns. This is Maturase K from Zingiber officinale (Ginger).